The primary structure comprises 360 residues: Photosystem II protein D1 2 (360 aa).

A run of 3 helical transmembrane segments spans residues 29 to 46, 118 to 133, and 142 to 156; these read YIGW…AATT, HFLT…EWEL, and WICL…AATA. Histidine 118 lines the chlorophyll a pocket. A pheophytin a-binding site is contributed by tyrosine 126. Residues aspartate 170 and glutamate 189 each coordinate [CaMn4O5] cluster. The chain crosses the membrane as a helical span at residues 197–218; it reads FHMLGVAGVFGGSLFSAMHGSL. Histidine 198 provides a ligand contact to chlorophyll a. A quinone contacts are provided by residues histidine 215 and 264-265; that span reads SF. Position 215 (histidine 215) interacts with Fe cation. Histidine 272 contacts Fe cation. A helical transmembrane segment spans residues 274 to 288; that stretch reads FLAAWPVIGIWFTAL. [CaMn4O5] cluster contacts are provided by histidine 332, glutamate 333, aspartate 342, and alanine 344. Residues 345–360 constitute a propeptide that is removed on maturation; it reads AGEVAPVALTAPAING.

Belongs to the reaction center PufL/M/PsbA/D family. PSII is composed of 1 copy each of membrane proteins PsbA, PsbB, PsbC, PsbD, PsbE, PsbF, PsbH, PsbI, PsbJ, PsbK, PsbL, PsbM, PsbT, PsbX, PsbY, PsbZ, Psb30/Ycf12, peripheral proteins PsbO, CyanoQ (PsbQ), PsbU, PsbV and a large number of cofactors. It forms dimeric complexes. The D1/D2 heterodimer binds P680, chlorophylls that are the primary electron donor of PSII, and subsequent electron acceptors. It shares a non-heme iron and each subunit binds pheophytin, quinone, additional chlorophylls, carotenoids and lipids. D1 provides most of the ligands for the Mn4-Ca-O5 cluster of the oxygen-evolving complex (OEC). There is also a Cl(-1) ion associated with D1 and D2, which is required for oxygen evolution. The PSII complex binds additional chlorophylls, carotenoids and specific lipids. is required as a cofactor. Tyr-161 forms a radical intermediate that is referred to as redox-active TyrZ, YZ or Y-Z. Post-translationally, C-terminally processed by CtpA; processing is essential to allow assembly of the oxygen-evolving complex and thus photosynthetic growth.

It is found in the cellular thylakoid membrane. The enzyme catalyses 2 a plastoquinone + 4 hnu + 2 H2O = 2 a plastoquinol + O2. In terms of biological role, photosystem II (PSII) is a light-driven water:plastoquinone oxidoreductase that uses light energy to abstract electrons from H(2)O, generating O(2) and a proton gradient subsequently used for ATP formation. It consists of a core antenna complex that captures photons, and an electron transfer chain that converts photonic excitation into a charge separation. The D1/D2 (PsbA/PsbD) reaction center heterodimer binds P680, the primary electron donor of PSII as well as several subsequent electron acceptors. The chain is Photosystem II protein D1 2 from Trichormus variabilis (strain ATCC 29413 / PCC 7937) (Anabaena variabilis).